The sequence spans 634 residues: Nicotinic receptor-associated protein 1 (634 aa).

2 consecutive C2 domains span residues methionine 1–leucine 141 and lysine 159–leucine 295. Positions 29, 30, 36, 105, 107, 119, 189, 195, 251, 253, and 271 each coordinate Ca(2+). Positions aspartate 338–leucine 557 constitute a VWFA domain. The disordered stretch occupies residues arginine 576–threonine 603. Over residues proline 582 to proline 592 the composition is skewed to basic and acidic residues.

The protein belongs to the copine family. In terms of assembly, interacts with nicotinic acetylcholine receptor. Requires Ca(2+) as cofactor. In terms of tissue distribution, expressed in head and tail neurons, ventral cord moto-neurons, body wall muscles and hypodermal cells of the vulva.

The protein localises to the cell membrane. Exhibits calcium-dependent phospholipid binding properties. May function in membrane trafficking. Regulates synaptic levels of nicotinic acetylcholine receptor subunit lev-1 and unc-38 in the nerve cord. Involved in nicotinic acetylcholine receptor (nAChR)-mediated sensitivity to nicotine and levamisole. Affects directional sperm motility. In Caenorhabditis elegans, this protein is Nicotinic receptor-associated protein 1 (nra-1).